A 209-amino-acid chain; its full sequence is Protein Nef (209 aa).

The N-myristoyl glycine; by host moiety is linked to residue Gly2. At Ser6 the chain carries Phosphoserine; by host. Disordered stretches follow at residues 16–35 (IRER…AVSQ) and 43–71 (DKCG…EVGF). Positions 47–61 (AAASSSPAANNASCE) are enriched in low complexity. The tract at residues 65-68 (EEEE) is acidic; interacts with host PACS1 and PACS2; stabilizes the interaction of NEF/MHC-I with host AP1M1; necessary for MHC-I internalization. The interval 72-81 (PVRPQVPLRP) is SH3-binding; interaction with Src family tyrosine kinases. The short motif at 75 to 78 (PQVP) is the PxxP; stabilizes the interaction of NEF/MHC-I with host AP1M1; necessary for MHC-I internalization element. The mediates dimerization, Nef-PTE1 interaction stretch occupies residues 111 to 127 (EILDLWVYHTQGYFPDW). The tract at residues 151–183 (MSPEEVEEANEGENNCLLHPISQHGMEDAEREV) is binding to ATP6V1H. The Dileucine internalization motif; necessary for CD4 internalization motif lies at 167–168 (LL). The Diacidic; necessary for CD4 internalization motif lies at 177–178 (ED).

The protein belongs to the lentivirus primate group Nef protein family. Monomer; cytosolic form. Homodimer; membrane bound form. Interacts with Nef associated p21-activated kinase (PAK2); this interaction activates PAK2. Associates with the Nef-MHC-I-AP1 complex; this complex is required for MHC-I internalization. Interacts (via C-terminus) with host PI3-kinase. Interacts with host PACS1; this interaction seems to be weak. Interacts with host PACS2. Interacts with host LCK and MAPK3; these interactions inhibit the kinase activity of the latter. Interacts with host ATP6V1H; this interaction may play a role in CD4 endocytosis. Associates with the CD4-Nef-AP2 complex; this complex is required for CD4 internalization. Interacts with host AP2 subunit alpha and AP2 subunit sigma2. Interacts with TCR-zeta chain; this interaction up-regulates the Fas ligand (FasL) surface expression. Interacts with host HCK, LYN, and SRC; these interactions activate the Src family kinases. Interacts with MAP3K5; this interaction inhibits the Fas and TNFR-mediated death signals. Interacts with beta-COP and PTE1. Interacts with human RACK1; this increases Nef phosphorylation by PKC. Interacts with TP53; this interaction decreases the half-life of TP53, protecting the infected cell against p53-mediated apoptosis. Post-translationally, the virion-associated Nef proteins are cleaved by the viral protease to release the soluble C-terminal core protein. Nef is probably cleaved concomitantly with viral structural proteins on maturation of virus particles. In terms of processing, myristoylated. Phosphorylated on serine residues, probably by host PKCdelta and theta.

Its subcellular location is the host cell membrane. The protein resides in the virion. The protein localises to the secreted. It is found in the host Golgi apparatus membrane. Its function is as follows. Factor of infectivity and pathogenicity, required for optimal virus replication. Alters numerous pathways of T-lymphocyte function and down-regulates immunity surface molecules in order to evade host defense and increase viral infectivity. Alters the functionality of other immunity cells, like dendritic cells, monocytes/macrophages and NK cells. In infected CD4(+) T-lymphocytes, down-regulates the surface MHC-I, mature MHC-II, CD4, CD28, CCR5 and CXCR4 molecules. Mediates internalization and degradation of host CD4 through the interaction of with the cytoplasmic tail of CD4, the recruitment of AP-2 (clathrin adapter protein complex 2), internalization through clathrin coated pits, and subsequent transport to endosomes and lysosomes for degradation. Diverts host MHC-I molecules to the trans-Golgi network-associated endosomal compartments by an endocytic pathway to finally target them for degradation. MHC-I down-regulation may involve AP-1 (clathrin adapter protein complex 1) or possibly Src family kinase-ZAP70/Syk-PI3K cascade recruited by PACS2. In consequence infected cells are masked for immune recognition by cytotoxic T-lymphocytes. Decreasing the number of immune receptors also prevents reinfection by more HIV particles (superinfection). Down-regulates host SERINC3 and SERINC5 thereby excluding these proteins from the viral particles. Virion infectivity is drastically higher when SERINC3 or SERINC5 are excluded from the viral envelope, because these host antiviral proteins impair the membrane fusion event necessary for subsequent virion penetration. In terms of biological role, bypasses host T-cell signaling by inducing a transcriptional program nearly identical to that of anti-CD3 cell activation. Interaction with TCR-zeta chain up-regulates the Fas ligand (FasL). Increasing surface FasL molecules and decreasing surface MHC-I molecules on infected CD4(+) cells send attacking cytotoxic CD8+ T-lymphocytes into apoptosis. Functionally, plays a role in optimizing the host cell environment for viral replication without causing cell death by apoptosis. Protects the infected cells from apoptosis in order to keep them alive until the next virus generation is ready to strike. Inhibits the Fas and TNFR-mediated death signals by blocking MAP3K5/ASK1. Decreases the half-life of TP53, protecting the infected cell against p53-mediated apoptosis. Inhibits the apoptotic signals regulated by the Bcl-2 family proteins through the formation of a Nef/PI3-kinase/PAK2 complex that leads to activation of PAK2 and induces phosphorylation of host BAD. Its function is as follows. Extracellular Nef protein targets CD4(+) T-lymphocytes for apoptosis by interacting with CXCR4 surface receptors. The sequence is that of Protein Nef from Human immunodeficiency virus type 1 group M subtype A (isolate MAL) (HIV-1).